Consider the following 81-residue polypeptide: Cytochrome b559 subunit alpha (81 aa).

Positions 18 and 23 each coordinate heme. The helical transmembrane segment at Y19–T40 threads the bilayer.

It belongs to the PsbE/PsbF family. Heterodimer of an alpha subunit and a beta subunit. PSII is composed of 1 copy each of membrane proteins PsbA, PsbB, PsbC, PsbD, PsbE, PsbF, PsbH, PsbI, PsbJ, PsbK, PsbL, PsbM, PsbT, PsbX, PsbY, PsbZ, Psb30/Ycf12, peripheral proteins PsbO, CyanoQ (PsbQ), PsbU, PsbV and a large number of cofactors. It forms dimeric complexes. The cofactor is heme b.

The protein localises to the cellular thylakoid membrane. Its function is as follows. This b-type cytochrome is tightly associated with the reaction center of photosystem II (PSII). PSII is a light-driven water:plastoquinone oxidoreductase that uses light energy to abstract electrons from H(2)O, generating O(2) and a proton gradient subsequently used for ATP formation. It consists of a core antenna complex that captures photons, and an electron transfer chain that converts photonic excitation into a charge separation. The sequence is that of Cytochrome b559 subunit alpha from Synechocystis sp. (strain ATCC 27184 / PCC 6803 / Kazusa).